Reading from the N-terminus, the 271-residue chain is MSKIQSTFQRLQVTGRRALIPFITAGDPAPELTVPLMNALVEGGADIIELGVPFSDPMADGPTIQRASERALANGMTLRRVLDTVREFRTGNAETPVVLMGYANPIEAMGVERFVSAAREAQVDGVLIVDYPPEECESFARAAKDAGLDPIFLLAPTSTEQRFRDVARVGSGYIYYVSLKGVTGSATLDFDEVAARIPQIRAQVGMPVGVGFGIRDAESARRIGEVADAVVIGSRIIEEIERSPRDRLAANVTAFLREVRTALDQVEGSVR.

Residues Glu49 and Asp60 each act as proton acceptor in the active site.

Belongs to the TrpA family. Tetramer of two alpha and two beta chains.

It catalyses the reaction (1S,2R)-1-C-(indol-3-yl)glycerol 3-phosphate + L-serine = D-glyceraldehyde 3-phosphate + L-tryptophan + H2O. It functions in the pathway amino-acid biosynthesis; L-tryptophan biosynthesis; L-tryptophan from chorismate: step 5/5. Functionally, the alpha subunit is responsible for the aldol cleavage of indoleglycerol phosphate to indole and glyceraldehyde 3-phosphate. The protein is Tryptophan synthase alpha chain of Aromatoleum aromaticum (strain DSM 19018 / LMG 30748 / EbN1) (Azoarcus sp. (strain EbN1)).